The chain runs to 205 residues: Heme-binding protein 2 (205 aa).

Residues 1–39 (MAEPLQPDPGAAEDAAAQAVETPGWKAPEDAGPQPGSYE) form a disordered region. Ala2 carries the post-translational modification N-acetylalanine. Position 181 is a phosphoserine (Ser181).

The protein belongs to the HEBP family. In terms of assembly, monomer. Interacts with LRPPRC. May interact with BCL2L1; an interaction with BCL2L1 was observed using a peptide, but not with the full-length protein. The full-length protein would have to undergo a major conformation change for the interaction to occur. Interacts with PDCD6. In terms of tissue distribution, detected in placenta.

The protein resides in the cytoplasm. It localises to the mitochondrion. Its function is as follows. Can promote mitochondrial permeability transition and facilitate necrotic cell death under different types of stress conditions. The chain is Heme-binding protein 2 (HEBP2) from Homo sapiens (Human).